The sequence spans 228 residues: Cytidylate kinase (228 aa).

Residue 17-25 (GPTASGKGT) coordinates ATP.

Belongs to the cytidylate kinase family. Type 1 subfamily.

Its subcellular location is the cytoplasm. It catalyses the reaction CMP + ATP = CDP + ADP. The enzyme catalyses dCMP + ATP = dCDP + ADP. This is Cytidylate kinase from Burkholderia cenocepacia (strain HI2424).